A 172-amino-acid chain; its full sequence is Large ribosomal subunit protein bL17 (172 aa).

A compositionally biased stretch (basic and acidic residues) spans 140–160; that stretch reads LKAEAKAKREEKKPAKKEEKP. The segment at 140–172 is disordered; that stretch reads LKAEAKAKREEKKPAKKEEKPKKAKKEKAAASN.

The protein belongs to the bacterial ribosomal protein bL17 family. As to quaternary structure, part of the 50S ribosomal subunit. Contacts protein L32.

The protein is Large ribosomal subunit protein bL17 of Leptospira biflexa serovar Patoc (strain Patoc 1 / Ames).